The chain runs to 377 residues: 5-hydroxytryptamine receptor 1D (377 aa).

Residues asparagine 5, asparagine 17, and asparagine 21 are each glycosylated (N-linked (GlcNAc...) asparagine). Helical transmembrane passes span 39–64 (ISLA…TTIF), 76–97 (LIGS…ISIA), and 110–134 (LCDI…VIAL). The cysteines at positions 111 and 188 are disulfide-linked. Residues aspartate 118 and cysteine 122 each coordinate serotonin. Positions 135 to 137 (DRY) match the DRY motif; important for ligand-induced conformation changes motif. 4 helical membrane-spanning segments follow: residues 155-176 (AAVM…PLFW), 195-218 (ISYT…ILYG), 301-326 (KTLG…VLPI), and 336-359 (ALFD…YTVF). Serine 321 serves as a coordination point for serotonin. The NPxxY motif; important for ligand-induced conformation changes and signaling motif lies at 352-356 (NPIIY).

Belongs to the G-protein coupled receptor 1 family. As to quaternary structure, homodimer. Heterodimer with HTR1B.

Its subcellular location is the cell membrane. In terms of biological role, G-protein coupled receptor for 5-hydroxytryptamine (serotonin). Also functions as a receptor for ergot alkaloid derivatives, various anxiolytic and antidepressant drugs and other psychoactive substances. Ligand binding causes a conformation change that triggers signaling via guanine nucleotide-binding proteins (G proteins) and modulates the activity of downstream effectors, such as adenylate cyclase. HTR1D is coupled to G(i)/G(o) G alpha proteins and mediates inhibitory neurotransmission by inhibiting adenylate cyclase activity. Regulates the release of 5-hydroxytryptamine in the brain, and thereby affects neural activity. May also play a role in regulating the release of other neurotransmitters. May play a role in vasoconstriction. This Canis lupus familiaris (Dog) protein is 5-hydroxytryptamine receptor 1D (HTR1D).